Reading from the N-terminus, the 129-residue chain is Prefoldin subunit 6 (129 aa).

N-acetylalanine is present on Ala2. N6-acetyllysine is present on Lys21. The residue at position 66 (Lys66) is an N6-acetyllysine; alternate. Lys66 is covalently cross-linked (Glycyl lysine isopeptide (Lys-Gly) (interchain with G-Cter in SUMO1); alternate). Lys66 participates in a covalent cross-link: Glycyl lysine isopeptide (Lys-Gly) (interchain with G-Cter in SUMO2); alternate.

It belongs to the prefoldin subunit beta family. Heterohexamer of two PFD-alpha type and four PFD-beta type subunits. Component of the PAQosome complex which is responsible for the biogenesis of several protein complexes and which consists of R2TP complex members RUVBL1, RUVBL2, RPAP3 and PIH1D1, URI complex members PFDN2, PFDN6, PDRG1, UXT and URI1 as well as ASDURF, POLR2E and DNAAF10/WDR92.

Its function is as follows. Binds specifically to cytosolic chaperonin (c-CPN) and transfers target proteins to it. Binds to nascent polypeptide chain and promotes folding in an environment in which there are many competing pathways for nonnative proteins. The chain is Prefoldin subunit 6 (PFDN6) from Canis lupus familiaris (Dog).